The chain runs to 335 residues: Cobalt-precorrin-5B C(1)-methyltransferase (335 aa).

It belongs to the CbiD family.

It catalyses the reaction Co-precorrin-5B + S-adenosyl-L-methionine = Co-precorrin-6A + S-adenosyl-L-homocysteine. Its pathway is cofactor biosynthesis; adenosylcobalamin biosynthesis; cob(II)yrinate a,c-diamide from sirohydrochlorin (anaerobic route): step 6/10. Catalyzes the methylation of C-1 in cobalt-precorrin-5B to form cobalt-precorrin-6A. The polypeptide is Cobalt-precorrin-5B C(1)-methyltransferase (Methanospirillum hungatei JF-1 (strain ATCC 27890 / DSM 864 / NBRC 100397 / JF-1)).